A 328-amino-acid polypeptide reads, in one-letter code: Phosphate acyltransferase (328 aa).

The protein belongs to the PlsX family. Homodimer. Probably interacts with PlsY.

It is found in the cytoplasm. The enzyme catalyses a fatty acyl-[ACP] + phosphate = an acyl phosphate + holo-[ACP]. It participates in lipid metabolism; phospholipid metabolism. In terms of biological role, catalyzes the reversible formation of acyl-phosphate (acyl-PO(4)) from acyl-[acyl-carrier-protein] (acyl-ACP). This enzyme utilizes acyl-ACP as fatty acyl donor, but not acyl-CoA. This chain is Phosphate acyltransferase, found in Campylobacter jejuni subsp. doylei (strain ATCC BAA-1458 / RM4099 / 269.97).